The following is a 210-amino-acid chain: Thymidylate kinase (210 aa).

Residue 11–18 (GLEGAGKS) participates in ATP binding.

It belongs to the thymidylate kinase family.

It catalyses the reaction dTMP + ATP = dTDP + ADP. In terms of biological role, phosphorylation of dTMP to form dTDP in both de novo and salvage pathways of dTTP synthesis. In Vibrio parahaemolyticus serotype O3:K6 (strain RIMD 2210633), this protein is Thymidylate kinase.